We begin with the raw amino-acid sequence, 426 residues long: D-tagatose-1,6-bisphosphate aldolase subunit KbaZ (426 aa).

Belongs to the GatZ/KbaZ family. KbaZ subfamily. As to quaternary structure, forms a complex with KbaY.

The protein operates within carbohydrate metabolism; D-tagatose 6-phosphate degradation; D-glyceraldehyde 3-phosphate and glycerone phosphate from D-tagatose 6-phosphate: step 2/2. Functionally, component of the tagatose-1,6-bisphosphate aldolase KbaYZ that is required for full activity and stability of the Y subunit. Could have a chaperone-like function for the proper and stable folding of KbaY. When expressed alone, KbaZ does not show any aldolase activity. The polypeptide is D-tagatose-1,6-bisphosphate aldolase subunit KbaZ (Escherichia coli (strain K12 / MC4100 / BW2952)).